Consider the following 182-residue polypeptide: ATP-dependent protease subunit HslV (182 aa).

Thr12 is an active-site residue. The Na(+) site is built by Ala167, Cys170, and Thr173.

This sequence belongs to the peptidase T1B family. HslV subfamily. As to quaternary structure, a double ring-shaped homohexamer of HslV is capped on each side by a ring-shaped HslU homohexamer. The assembly of the HslU/HslV complex is dependent on binding of ATP.

It is found in the cytoplasm. It catalyses the reaction ATP-dependent cleavage of peptide bonds with broad specificity.. Allosterically activated by HslU binding. Protease subunit of a proteasome-like degradation complex believed to be a general protein degrading machinery. This chain is ATP-dependent protease subunit HslV, found in Chlorobium limicola (strain DSM 245 / NBRC 103803 / 6330).